Here is a 493-residue protein sequence, read N- to C-terminus: Glutamyl-tRNA(Gln) amidotransferase subunit A (493 aa).

Residues lysine 79 and serine 159 each act as charge relay system in the active site. Serine 183 (acyl-ester intermediate) is an active-site residue.

It belongs to the amidase family. GatA subfamily. Heterotrimer of A, B and C subunits.

It carries out the reaction L-glutamyl-tRNA(Gln) + L-glutamine + ATP + H2O = L-glutaminyl-tRNA(Gln) + L-glutamate + ADP + phosphate + H(+). Functionally, allows the formation of correctly charged Gln-tRNA(Gln) through the transamidation of misacylated Glu-tRNA(Gln) in organisms which lack glutaminyl-tRNA synthetase. The reaction takes place in the presence of glutamine and ATP through an activated gamma-phospho-Glu-tRNA(Gln). The chain is Glutamyl-tRNA(Gln) amidotransferase subunit A from Agrobacterium fabrum (strain C58 / ATCC 33970) (Agrobacterium tumefaciens (strain C58)).